We begin with the raw amino-acid sequence, 594 residues long: F-box/LRR-repeat protein At3g58980 (594 aa).

The F-box domain maps to 1 to 49 (MDRISNLPNEIICHIVSFLSAKEAAFASILSKRWRNLFTIVIKLQFDDS). LRR repeat units follow at residues 103–125 (ILDL…VFTC), 128–151 (LVKL…DAFL), 152–174 (PALE…AFEK), 203–218 (SPTL…DLYE), 219–242 (CEFT…AVPD), 249–272 (LDSL…GYVD), 288–314 (LRNV…AIPV), 315–339 (FKNL…FLPF), 344–369 (CPNL…VCHC), 403–414 (LEKLSGLKLVKL), 415–437 (HSLT…SSKC), 450–474 (LPSL…AFQK), 503–518 (SQTL…YWAE), 519–541 (HNLE…AHVP), and 584–594 (LRNVEILRLWM).

In Arabidopsis thaliana (Mouse-ear cress), this protein is F-box/LRR-repeat protein At3g58980.